The primary structure comprises 680 residues: Harmonin-binding protein USHBP1 (680 aa).

Over residues 1-15 (MSARATRPRSRRGRH) the composition is skewed to basic residues. Disordered regions lie at residues 1-101 (MSAR…GPAE), 135-162 (PVEA…GQQE), and 217-250 (ASPP…DSPM). Basic and acidic residues predominate over residues 76–86 (PEERREPEVEA). Coiled-coil stretches lie at residues 177-219 (LGTR…EASP), 362-386 (ATNG…VAMD), and 479-506 (LADL…LRAQ). The tract at residues 524–562 (LMGDGSSGGSSEDPSSEEEAGEDRQQHYQGPPALLGGQM) is disordered. Residues 573–661 (QELSASLTRA…QQAEELAVLT (89 aa)) are a coiled coil.

It belongs to the MCC family. As to quaternary structure, interacts via its C-terminus with the first PDZ domain of USH1C.

This is Harmonin-binding protein USHBP1 from Rattus norvegicus (Rat).